The sequence spans 715 residues: Serrate RNA effector molecule homolog (715 aa).

Disordered regions lie at residues 1-87 (MDSD…YSGP), 223-259 (ENKD…TDKA), and 629-715 (EPKH…DDIP). Basic and acidic residues-rich tracts occupy residues 7 to 25 (GDRR…DSYR), 37 to 57 (YDNK…SRGD), and 223 to 242 (ENKD…VKEE). Positions 243–256 (PNEEQEEGAIDDET) are enriched in acidic residues. The span at 629 to 659 (EPKHMPHMSRDDHRGGGGDRGYGRERDDDRG) shows a compositional bias: basic and acidic residues.

The protein belongs to the ARS2 family.

It is found in the nucleus. In terms of biological role, acts as a mediator between the cap-binding complex (CBC) and the primary microRNAs (miRNAs) processing machinery. Contributes to the stability and delivery of capped primary miRNA transcripts to the primary miRNA processing complex, thereby playing a role in RNA-mediated gene silencing (RNAi) by miRNAs. This Caenorhabditis briggsae protein is Serrate RNA effector molecule homolog.